A 134-amino-acid chain; its full sequence is Putative pre-16S rRNA nuclease (134 aa).

It belongs to the YqgF nuclease family.

The protein resides in the cytoplasm. Its function is as follows. Could be a nuclease involved in processing of the 5'-end of pre-16S rRNA. The chain is Putative pre-16S rRNA nuclease from Helicobacter pylori (strain Shi470).